A 232-amino-acid polypeptide reads, in one-letter code: Octanoyltransferase (232 aa).

In terms of domain architecture, BPL/LPL catalytic spans 43–231; that stretch reads DQTPNYFLFV…HFTQLFDCTV (189 aa). Residues 88-95, 160-162, and 173-175 contribute to the substrate site; these read RGGDITYH, ALG, and GFA. C191 acts as the Acyl-thioester intermediate in catalysis.

Belongs to the LipB family.

The protein localises to the cytoplasm. It catalyses the reaction octanoyl-[ACP] + L-lysyl-[protein] = N(6)-octanoyl-L-lysyl-[protein] + holo-[ACP] + H(+). The protein operates within protein modification; protein lipoylation via endogenous pathway; protein N(6)-(lipoyl)lysine from octanoyl-[acyl-carrier-protein]: step 1/2. Functionally, catalyzes the transfer of endogenously produced octanoic acid from octanoyl-acyl-carrier-protein onto the lipoyl domains of lipoate-dependent enzymes. Lipoyl-ACP can also act as a substrate although octanoyl-ACP is likely to be the physiological substrate. The chain is Octanoyltransferase from Flavobacterium psychrophilum (strain ATCC 49511 / DSM 21280 / CIP 103535 / JIP02/86).